The sequence spans 424 residues: Serine hydroxymethyltransferase (424 aa).

(6S)-5,6,7,8-tetrahydrofolate-binding positions include Leu113 and 117-119 (GHL). The residue at position 222 (Lys222) is an N6-(pyridoxal phosphate)lysine. 361-363 (SPF) contributes to the (6S)-5,6,7,8-tetrahydrofolate binding site.

It belongs to the SHMT family. Homodimer. Pyridoxal 5'-phosphate serves as cofactor.

It localises to the cytoplasm. It catalyses the reaction (6R)-5,10-methylene-5,6,7,8-tetrahydrofolate + glycine + H2O = (6S)-5,6,7,8-tetrahydrofolate + L-serine. It functions in the pathway one-carbon metabolism; tetrahydrofolate interconversion. Its pathway is amino-acid biosynthesis; glycine biosynthesis; glycine from L-serine: step 1/1. Catalyzes the reversible interconversion of serine and glycine with tetrahydrofolate (THF) serving as the one-carbon carrier. This reaction serves as the major source of one-carbon groups required for the biosynthesis of purines, thymidylate, methionine, and other important biomolecules. Also exhibits THF-independent aldolase activity toward beta-hydroxyamino acids, producing glycine and aldehydes, via a retro-aldol mechanism. The protein is Serine hydroxymethyltransferase of Flavobacterium johnsoniae (strain ATCC 17061 / DSM 2064 / JCM 8514 / BCRC 14874 / CCUG 350202 / NBRC 14942 / NCIMB 11054 / UW101) (Cytophaga johnsonae).